Here is a 108-residue protein sequence, read N- to C-terminus: Replication initiation control protein YabA (108 aa).

4 residues coordinate Zn(2+): histidine 83, cysteine 85, cysteine 99, and cysteine 102.

The protein belongs to the YabA family. Homotetramer. Interacts with both DnaA and DnaN, acting as a bridge between these two proteins. It depends on Zn(2+) as a cofactor.

It is found in the cytoplasm. It localises to the nucleoid. Functionally, involved in control of chromosome replication initiation. Inhibits the cooperative binding of DnaA to the oriC region, thus negatively regulating initiation of chromosome replication. Inhibits the ability of DnaA-ATP to form a helix on DNA; does not disassemble preformed DnaA-DNA helices. Decreases the residence time of DnaA on the chromosome at its binding sites (oriC, replication forks and promoter-binding sites). Tethers DnaA to the replication machinery via the DNA polymerase beta sliding clamp subunit (dnaN). Associates with oriC and other DnaA targets on the chromosome in a DnaA-dependent manner. The polypeptide is Replication initiation control protein YabA (Lactococcus lactis subsp. lactis (strain IL1403) (Streptococcus lactis)).